Reading from the N-terminus, the 82-residue chain is Delta-actitoxin-Aeq2b 3 (82 aa).

An N-terminal signal peptide occupies residues 1–19; that stretch reads MNRLMILVFAAVILALASA. The propeptide occupies 20 to 26; sequence DEDVDIT. Intrachain disulfides connect Cys-32/Cys-79, Cys-34/Cys-69, and Cys-62/Cys-80.

It belongs to the sea anemone sodium channel inhibitory toxin family. Type I subfamily.

It is found in the secreted. Its subcellular location is the nematocyst. Functionally, binds specifically to voltage-gated sodium channels (Nav), thereby delaying their inactivation during signal transduction. Causes death to crabs. The polypeptide is Delta-actitoxin-Aeq2b 3 (Actinia equina (Beadlet anemone)).